The following is a 178-amino-acid chain: Translation initiation factor IF-3 (178 aa).

It belongs to the IF-3 family. Monomer.

Its subcellular location is the cytoplasm. Functionally, IF-3 binds to the 30S ribosomal subunit and shifts the equilibrium between 70S ribosomes and their 50S and 30S subunits in favor of the free subunits, thus enhancing the availability of 30S subunits on which protein synthesis initiation begins. This Picosynechococcus sp. (strain ATCC 27264 / PCC 7002 / PR-6) (Agmenellum quadruplicatum) protein is Translation initiation factor IF-3.